Consider the following 467-residue polypeptide: UDP-N-acetylmuramate--L-alanine ligase (467 aa).

ATP is bound at residue 114–120; it reads GTHGKTT.

This sequence belongs to the MurCDEF family.

Its subcellular location is the cytoplasm. It carries out the reaction UDP-N-acetyl-alpha-D-muramate + L-alanine + ATP = UDP-N-acetyl-alpha-D-muramoyl-L-alanine + ADP + phosphate + H(+). It functions in the pathway cell wall biogenesis; peptidoglycan biosynthesis. Functionally, cell wall formation. The sequence is that of UDP-N-acetylmuramate--L-alanine ligase from Bradyrhizobium sp. (strain ORS 278).